Here is a 123-residue protein sequence, read N- to C-terminus: Periplasmic [Fe] hydrogenase small subunit (123 aa).

The segment at residues 1–34 (MQIASITRRGFLKVACVTTGAALIGIRMTGKAVA) is a signal peptide (tat-type signal). Positions 103 to 123 (TTAGKLPNPRASEFEGPYPYE) are disordered.

As to quaternary structure, heterodimer of a large and a small subunit. Post-translationally, predicted to be exported by the Tat system. The position of the signal peptide cleavage has been experimentally proven.

It localises to the periplasm. The catalysed reaction is H2 + 2 oxidized [2Fe-2S]-[ferredoxin] = 2 reduced [2Fe-2S]-[ferredoxin] + 2 H(+). Functionally, may be involved in hydrogen uptake for the reduction of sulfate to hydrogen sulfide in an electron transport chain. Cytochrome c3 is likely to be the physiological electron carrier for the enzyme. In Nitratidesulfovibrio vulgaris (strain ATCC 29579 / DSM 644 / CCUG 34227 / NCIMB 8303 / VKM B-1760 / Hildenborough) (Desulfovibrio vulgaris), this protein is Periplasmic [Fe] hydrogenase small subunit (hydB).